The chain runs to 520 residues: Transcription factor MYB33 (520 aa).

The tract at residues 1–24 (MSYTSTDSDHNESPAADDNGSDCR) is disordered. HTH myb-type domains are found at residues 29–81 (GHAL…ANHL) and 82–136 (RPNL…KRRQ). 2 DNA-binding regions (H-T-H motif) span residues 57–81 (WNAVQKHTSLFRCGKSCRLRWANHL) and 109–132 (WARMAAHLPGRTDNEIKNYWNTRI). Over residues 331 to 342 (SSSPPHSDLLDP) the composition is skewed to low complexity. Disordered stretches follow at residues 331 to 359 (SSSPPHSDLLDPFDTYIQSPPPPTGGEES) and 426 to 447 (EMSTQNADETPPRQREKKRKPL).

In terms of tissue distribution, mostly expressed in stems, shoot apices, flowers and floral shoot tips, and, to a lower extent, in roots (e.g. root tips), seedlings, leaves and siliques.

The protein localises to the nucleus. Its function is as follows. Transcriptional activator of alpha-amylase expression that binds to 5'-CAACTGTC-3' motif in target gene promoter. Positive regulator of abscisic acid (ABA) responses leading to growth arrest during seed germination. In vegetative tissues, inhibits growth by reducing cell proliferation. Promotes the expression of aleurone-related genes (e.g. CP1, CP, GASA1, BXL1 and BXL2) in seeds. Together with MYB65 and MYB101, promotes the programmed cell death (PCD) the vacuolation of protein storage vacuoles (PSVs) in the aleurone layers during seed germination. Binds to a GARE site (GA-response element) in the LEAFY promoter, essential for its gibberellic acid (GA)-mediated induction. Together with MYB65, facilitates anther and tapetum development. The protein is Transcription factor MYB33 of Arabidopsis thaliana (Mouse-ear cress).